The primary structure comprises 205 residues: Large ribosomal subunit protein uL3 (205 aa).

The protein belongs to the universal ribosomal protein uL3 family. Part of the 50S ribosomal subunit. Forms a cluster with proteins L14 and L19.

Its function is as follows. One of the primary rRNA binding proteins, it binds directly near the 3'-end of the 23S rRNA, where it nucleates assembly of the 50S subunit. This is Large ribosomal subunit protein uL3 from Bacteroides thetaiotaomicron (strain ATCC 29148 / DSM 2079 / JCM 5827 / CCUG 10774 / NCTC 10582 / VPI-5482 / E50).